The chain runs to 339 residues: Ketol-acid reductoisomerase (NADP(+)) (339 aa).

In terms of domain architecture, KARI N-terminal Rossmann spans 1 to 182 (MRVYYDRDAD…GGGRAGIIET (182 aa)). NADP(+) is bound by residues 24–27 (YGSQ), Arg-48, Ser-51, Thr-53, and 83–86 (DELQ). Residue His-108 is part of the active site. Gly-134 provides a ligand contact to NADP(+). The KARI C-terminal knotted domain occupies 183–328 (TFKEECETDL…AKLRGMMPWI (146 aa)). The Mg(2+) site is built by Asp-191, Glu-195, Glu-227, and Glu-231. Residue Ser-252 coordinates substrate.

The protein belongs to the ketol-acid reductoisomerase family. Mg(2+) is required as a cofactor.

It catalyses the reaction (2R)-2,3-dihydroxy-3-methylbutanoate + NADP(+) = (2S)-2-acetolactate + NADPH + H(+). The catalysed reaction is (2R,3R)-2,3-dihydroxy-3-methylpentanoate + NADP(+) = (S)-2-ethyl-2-hydroxy-3-oxobutanoate + NADPH + H(+). Its pathway is amino-acid biosynthesis; L-isoleucine biosynthesis; L-isoleucine from 2-oxobutanoate: step 2/4. It participates in amino-acid biosynthesis; L-valine biosynthesis; L-valine from pyruvate: step 2/4. In terms of biological role, involved in the biosynthesis of branched-chain amino acids (BCAA). Catalyzes an alkyl-migration followed by a ketol-acid reduction of (S)-2-acetolactate (S2AL) to yield (R)-2,3-dihydroxy-isovalerate. In the isomerase reaction, S2AL is rearranged via a Mg-dependent methyl migration to produce 3-hydroxy-3-methyl-2-ketobutyrate (HMKB). In the reductase reaction, this 2-ketoacid undergoes a metal-dependent reduction by NADPH to yield (R)-2,3-dihydroxy-isovalerate. This Methylorubrum populi (strain ATCC BAA-705 / NCIMB 13946 / BJ001) (Methylobacterium populi) protein is Ketol-acid reductoisomerase (NADP(+)).